The primary structure comprises 328 residues: Lipoate--protein ligase 1 (328 aa).

In terms of domain architecture, BPL/LPL catalytic spans 27–214 (PAEESYFLFY…TIFGETEVEE (188 aa)). ATP contacts are provided by residues arginine 69, 74-77 (GAVY), and lysine 131. Lysine 131 provides a ligand contact to (R)-lipoate.

The catalysed reaction is L-lysyl-[lipoyl-carrier protein] + (R)-lipoate + ATP = N(6)-[(R)-lipoyl]-L-lysyl-[lipoyl-carrier protein] + AMP + diphosphate + H(+). It participates in protein modification; protein lipoylation via exogenous pathway; protein N(6)-(lipoyl)lysine from lipoate: step 1/2. Its pathway is protein modification; protein lipoylation via exogenous pathway; protein N(6)-(lipoyl)lysine from lipoate: step 2/2. Catalyzes the lipoylation of proteins, such as GcvH (SAV0833) and GcvH-L (SAV0324), likely via the ATP-dependent activation of lipoate to lipoyl-AMP and the transfer of the activated lipoyl onto the lipoyl domain of the target protein. In Staphylococcus aureus (strain Mu50 / ATCC 700699), this protein is Lipoate--protein ligase 1.